The following is a 285-amino-acid chain: Vacuolar protein sorting-associated protein 37B (285 aa).

The interaction with IST1 stretch occupies residues 50–170 (ASNRSLAEGN…ELVLKGQRHP (121 aa)). Residues 84 to 173 (FEAYQIKKTK…LKGQRHPQAG (90 aa)) form the VPS37 C-terminal domain. 2 disordered regions span residues 167 to 215 (QRHP…PPVP) and 242 to 285 (PLPP…FILQ). 2 stretches are compositionally biased toward pro residues: residues 173–184 (GAPPPPRVPEPS) and 206–215 (RIPPPPPPVP). Positions 250 to 259 (PSQQGFSAQL) are enriched in polar residues. Pro residues predominate over residues 262–275 (PYPPALPQRPPPRM). Over residues 276–285 (APHQPGFILQ) the composition is skewed to low complexity.

Belongs to the VPS37 family. As to quaternary structure, component of the ESCRT-I complex (endosomal sorting complex required for transport I) which consists of TSG101, VPS28, a VPS37 protein (VPS37A to -D) and MVB12A or MVB12B in a 1:1:1:1 stoichiometry. Interacts with TSG101, VPS28, MVB12A and MVB12B. Component of the ESCRT-I complex (endosomal sorting complex required for transport I) which consists of TSG101, VPS28, a VPS37 protein (VPS37A to -D) and UBAP1 in a 1:1:1:1 stoichiometry. Interacts with CEP55. Interacts with IST1.

It localises to the late endosome membrane. Its function is as follows. Component of the ESCRT-I complex, a regulator of vesicular trafficking process. Required for the sorting of endocytic ubiquitinated cargos into multivesicular bodies. May be involved in cell growth and differentiation. The protein is Vacuolar protein sorting-associated protein 37B (Vps37b) of Mus musculus (Mouse).